The sequence spans 333 residues: Complement C1q and tumor necrosis factor-related protein 9 (333 aa).

A signal peptide spans 1–19 (MRIWWLLLVMGACTRSVFS). The interval 22-194 (TCRQGHSGIP…GDRGEKGKVG (173 aa)) is disordered. Collagen-like domains follow at residues 24-82 (RQGH…DGRV), 84-130 (AKGI…KGEV), and 134-193 (GPEG…KGKV). Residues P31, P34, and P40 each carry the 4-hydroxyproline modification. The segment covering 42 to 57 (RDGRDGAKGDKGDAGE) has biased composition (basic and acidic residues). A 4-hydroxyproline mark is found at P58, P61, and P64. A compositionally biased stretch (basic and acidic residues) spans 67–88 (DGIRGEKGEPGADGRVEAKGIK). K73 is subject to 5-hydroxylysine. Residue K73 is glycosylated (O-linked (Gal...) hydroxylysine). A 4-hydroxyproline mark is found at P76 and P115. 5-hydroxylysine is present on K127. O-linked (Gal...) hydroxylysine glycosylation is present at K127. Residues P151, P160, and P175 each carry the 4-hydroxyproline modification. Positions 183–193 (WKGDRGEKGKV) are enriched in basic and acidic residues. The region spanning 197-333 (PLVPKSAFTV…FTGFLLFSSS (137 aa)) is the C1q domain.

As to quaternary structure, multimers (predominantly trimers). Interacts with ADIPOQ via the C1q domain to form a heterotrimeric complex. Post-translationally, the isomeric forms of the hydroxylated amino acids could not be determined in the mass-spectrometric methods reported in PubMed:18787108 but are assumed on the basis of their occurrence in collagen-like domains. In terms of tissue distribution, expressed predominantly in adipose tissue. Females express higher levels than males.

Its subcellular location is the secreted. Functionally, probable adipokine. Activates AMPK, AKT, and p44/42 MAPK signaling pathways. The polypeptide is Complement C1q and tumor necrosis factor-related protein 9 (C1qtnf9) (Mus musculus (Mouse)).